A 187-amino-acid polypeptide reads, in one-letter code: Threonylcarbamoyl-AMP synthase (187 aa).

A YrdC-like domain is found at 4–187 (TLTLSEAVTA…DARSGHILRL (184 aa)).

Belongs to the SUA5 family. TsaC subfamily.

Its subcellular location is the cytoplasm. The catalysed reaction is L-threonine + hydrogencarbonate + ATP = L-threonylcarbamoyladenylate + diphosphate + H2O. In terms of biological role, required for the formation of a threonylcarbamoyl group on adenosine at position 37 (t(6)A37) in tRNAs that read codons beginning with adenine. Catalyzes the conversion of L-threonine, HCO(3)(-)/CO(2) and ATP to give threonylcarbamoyl-AMP (TC-AMP) as the acyladenylate intermediate, with the release of diphosphate. The sequence is that of Threonylcarbamoyl-AMP synthase from Xylella fastidiosa (strain 9a5c).